Reading from the N-terminus, the 271-residue chain is Aminodeoxychorismate lyase (271 aa).

Residue lysine 140 is modified to N6-(pyridoxal phosphate)lysine.

The protein belongs to the class-IV pyridoxal-phosphate-dependent aminotransferase family. As to quaternary structure, homodimer. It depends on pyridoxal 5'-phosphate as a cofactor.

The catalysed reaction is 4-amino-4-deoxychorismate = 4-aminobenzoate + pyruvate + H(+). It functions in the pathway cofactor biosynthesis; tetrahydrofolate biosynthesis; 4-aminobenzoate from chorismate: step 2/2. In terms of biological role, involved in the biosynthesis of p-aminobenzoate (PABA), a precursor of tetrahydrofolate. Converts 4-amino-4-deoxychorismate into 4-aminobenzoate (PABA) and pyruvate. The chain is Aminodeoxychorismate lyase (pabC) from Vibrio harveyi (Beneckea harveyi).